The primary structure comprises 291 residues: Small ribosomal subunit protein uS2 (291 aa).

A disordered region spans residues Asn-235–Lys-291. A compositionally biased stretch (acidic residues) spans Ser-270 to Lys-291.

The protein belongs to the universal ribosomal protein uS2 family.

This is Small ribosomal subunit protein uS2 from Treponema denticola (strain ATCC 35405 / DSM 14222 / CIP 103919 / JCM 8153 / KCTC 15104).